The following is a 507-amino-acid chain: ESX-5 secretion system ATPase EccB5 (507 aa).

Residues 56-76 form a helical membrane-spanning segment; that stretch reads VVASVSAALVICLGSLLWSFI.

This sequence belongs to the EccB family. In terms of assembly, part of the ESX-5 / type VII secretion system (T7SS), which is composed of cytosolic and membrane components. The ESX-5 membrane complex is composed of EccB5, EccC5, EccD5 and EccE5.

It is found in the cell inner membrane. An ATPase. Part of the ESX-5 specialized secretion system, which is responsible for the secretion of EsxN and a number of PE_PGRS and PPE proteins. The sequence is that of ESX-5 secretion system ATPase EccB5 from Mycobacterium marinum (strain ATCC BAA-535 / M).